Here is a 37-residue protein sequence, read N- to C-terminus: Chorion class CB protein PCH12 (37 aa).

The central domain stretch occupies residues 1-26; sequence DGIFPTVGAGDVWYGCGDGAVGIVAE. Positions 27 to 37 are right arm; that stretch reads TPFASTTTNPA.

Belongs to the chorion protein family.

Functionally, this protein is one of many from the eggshell of the silk moth. This Antheraea polyphemus (Polyphemus moth) protein is Chorion class CB protein PCH12.